We begin with the raw amino-acid sequence, 155 residues long: Urease accessory protein UreE (155 aa).

It belongs to the UreE family.

It localises to the cytoplasm. In terms of biological role, involved in urease metallocenter assembly. Binds nickel. Probably functions as a nickel donor during metallocenter assembly. The sequence is that of Urease accessory protein UreE from Synechococcus sp. (strain CC9311).